The primary structure comprises 216 residues: Triosephosphate isomerase (216 aa).

A substrate-binding site is contributed by 7-9 (NLK). Residue His89 is the Electrophile of the active site. Glu137 functions as the Proton acceptor in the catalytic mechanism. Residues Ile142, Gly175, and 196–197 (AS) each bind substrate.

The protein belongs to the triosephosphate isomerase family. Homotetramer; dimer of dimers.

It localises to the cytoplasm. It carries out the reaction D-glyceraldehyde 3-phosphate = dihydroxyacetone phosphate. The protein operates within carbohydrate biosynthesis; gluconeogenesis. Its pathway is carbohydrate degradation; glycolysis; D-glyceraldehyde 3-phosphate from glycerone phosphate: step 1/1. In terms of biological role, involved in the gluconeogenesis. Catalyzes stereospecifically the conversion of dihydroxyacetone phosphate (DHAP) to D-glyceraldehyde-3-phosphate (G3P). This is Triosephosphate isomerase from Thermoplasma acidophilum (strain ATCC 25905 / DSM 1728 / JCM 9062 / NBRC 15155 / AMRC-C165).